Reading from the N-terminus, the 63-residue chain is Chromatin protein Cren7 (63 aa).

Belongs to the Cren7 family. In terms of assembly, monomer. Methylated at multiple sites, to varying extents.

It localises to the chromosome. The protein localises to the cytoplasm. Functionally, a chromatin protein, binds double-stranded DNA without sequence specificity. Constrains negative DNA supercoils. This Pyrobaculum calidifontis (strain DSM 21063 / JCM 11548 / VA1) protein is Chromatin protein Cren7.